Reading from the N-terminus, the 205-residue chain is Ypt/Rab-type GTPase Rab7 (205 aa).

GTP is bound by residues 17-23 (SGVGKTS), 33-40 (FSASYKAT), Gly-66, 125-128 (NKID), and 157-159 (SAK). Residues 37–45 (YKATIGADF) carry the Effector region motif. 2 S-geranylgeranyl cysteine lipidation sites follow: Cys-203 and Cys-205. Cysteine methyl ester is present on Cys-205.

It belongs to the small GTPase superfamily. Rab family.

The protein resides in the cell membrane. Its activity is regulated as follows. Alternates between an inactive form bound to GDP and an active form bound to GTP. Activated by guanine nucleotide-exchange factors (GEFs), and inactivated by GTPase-activating proteins (GAPs). Ypt/Rab-type GTPases are key regulators of membrane trafficking and intracellular vesicular transport. They act as molecular switches that convert between GTP-bound and GDP-bound states, and regulate virtually all steps of membrane traffic from the formation of the transport vesicle at the donor membrane to its fusion at the target membrane. In the GDP-bound state, Ypt proteins are predominantly cytosolic, solubilized through the interaction with a GDP dissociation inhibitor (GDI). In the GTP-bound state, the proteins are membrane bound and interact with specific effector proteins that select cargo, promote vesicle movement, or verify the correct site of fusion. In Neurospora crassa (strain ATCC 24698 / 74-OR23-1A / CBS 708.71 / DSM 1257 / FGSC 987), this protein is Ypt/Rab-type GTPase Rab7 (gtp-14).